A 189-amino-acid polypeptide reads, in one-letter code: GTPase NRas (189 aa).

GTP is bound by residues 10–18 (GAGGVGKSA) and 29–30 (VD). The Effector region motif lies at 32-40 (YDPTIEDSY). 57–61 (DTAGQ) provides a ligand contact to GTP. Ser89 carries the phosphoserine modification. 116-119 (NKCD) serves as a coordination point for GTP. Residues 166 to 185 (YRMKKLNSSDDGTQGCMGLP) form a hypervariable region region. Lys170 is covalently cross-linked (Glycyl lysine isopeptide (Lys-Gly) (interchain with G-Cter in ubiquitin)). The S-palmitoyl cysteine moiety is linked to residue Cys181. The S-farnesyl cysteine moiety is linked to residue Cys186. Residues 187–189 (VVM) constitute a propeptide, removed in mature form.

It belongs to the small GTPase superfamily. Ras family. In terms of assembly, interacts (active GTP-bound form preferentially) with RGS14. Interacts (active GTP-bound form) with RASSF7. Interacts (active GTP-bound form) with both SHOC2 and PP1c (all isoforms) to form a tertiary complex; SHOC2 and PP1c preferably bind M-Ras/MRAS, but they also bind K-Ras/KRAS, N-Ras/NRAS and H-Ras/HRAS. Post-translationally, palmitoylated by the ZDHHC9-GOLGA7 complex. Depalmitoylated by ABHD17A, ABHD17B and ABHD17C. A continuous cycle of de- and re-palmitoylation regulates rapid exchange between plasma membrane and Golgi. In terms of processing, acetylation at Lys-104 prevents interaction with guanine nucleotide exchange factors (GEFs). Ubiquitinated by the BCR(LZTR1) E3 ubiquitin ligase complex at Lys-170 in a non-degradative manner, leading to inhibit Ras signaling by decreasing Ras association with membranes. Post-translationally, phosphorylation at Ser-89 enhances NRAS association with its downstream effectors.

It is found in the cell membrane. The protein resides in the golgi apparatus membrane. The catalysed reaction is GTP + H2O = GDP + phosphate + H(+). Alternates between an inactive form bound to GDP and an active form bound to GTP. Activated by a guanine nucleotide-exchange factor (GEF) and inactivated by a GTPase-activating protein (GAP). Ras proteins bind GDP/GTP and possess intrinsic GTPase activity. The protein is GTPase NRas (NRAS) of Pongo abelii (Sumatran orangutan).